The sequence spans 605 residues: Elongation factor 4 (605 aa).

In terms of domain architecture, tr-type G spans 8–190 (RRVRNFCIVA…AIITRIPPPQ (183 aa)). GTP is bound by residues 20–25 (DHGKST) and 137–140 (NKID).

Belongs to the TRAFAC class translation factor GTPase superfamily. Classic translation factor GTPase family. LepA subfamily.

It localises to the cell inner membrane. The catalysed reaction is GTP + H2O = GDP + phosphate + H(+). In terms of biological role, required for accurate and efficient protein synthesis under certain stress conditions. May act as a fidelity factor of the translation reaction, by catalyzing a one-codon backward translocation of tRNAs on improperly translocated ribosomes. Back-translocation proceeds from a post-translocation (POST) complex to a pre-translocation (PRE) complex, thus giving elongation factor G a second chance to translocate the tRNAs correctly. Binds to ribosomes in a GTP-dependent manner. This chain is Elongation factor 4, found in Treponema pallidum (strain Nichols).